The sequence spans 350 residues: Spermidine/putrescine import ATP-binding protein PotA (350 aa).

The ABC transporter domain maps to 6–236 (LELRNISKQY…PENLWTAQFI (231 aa)). 38–45 (GPSGCGKT) contributes to the ATP binding site.

Belongs to the ABC transporter superfamily. Spermidine/putrescine importer (TC 3.A.1.11.1) family. The complex is composed of two ATP-binding proteins (PotA), two transmembrane proteins (PotB and PotC) and a solute-binding protein (PotD).

It is found in the cell membrane. The catalysed reaction is ATP + H2O + polyamine-[polyamine-binding protein]Side 1 = ADP + phosphate + polyamineSide 2 + [polyamine-binding protein]Side 1.. Part of the ABC transporter complex PotABCD involved in spermidine/putrescine import. Responsible for energy coupling to the transport system. The polypeptide is Spermidine/putrescine import ATP-binding protein PotA (Spiroplasma citri).